The following is a 291-amino-acid chain: Fructose-1,6-bisphosphatase class 1 1 (291 aa).

4 residues coordinate Mg(2+): E78, D95, L97, and D98. Substrate-binding positions include 98–101 (DGSS), Y203, and K233. E239 lines the Mg(2+) pocket.

It belongs to the FBPase class 1 family. In terms of assembly, homotetramer. Mg(2+) is required as a cofactor.

The protein resides in the cytoplasm. It carries out the reaction beta-D-fructose 1,6-bisphosphate + H2O = beta-D-fructose 6-phosphate + phosphate. The protein operates within carbohydrate biosynthesis; gluconeogenesis. The polypeptide is Fructose-1,6-bisphosphatase class 1 1 (Haloarcula marismortui (strain ATCC 43049 / DSM 3752 / JCM 8966 / VKM B-1809) (Halobacterium marismortui)).